The primary structure comprises 305 residues: Probable xyloglucan endotransglucosylase/hydrolase protein 21 (305 aa).

A signal peptide spans 1–25; that stretch reads MVSSTLLVMSISLFLGLSILLVVHG. Positions 26–216 constitute a GH16 domain; that stretch reads KDFNQDIDIT…WSQGPFVASF (191 aa). The N-linked (GlcNAc...) asparagine glycan is linked to Asn-46. Glu-102 functions as the Nucleophile in the catalytic mechanism. The active-site Proton donor is the Glu-106. Residue Glu-106 participates in xyloglucan binding. N-linked (GlcNAc...) asparagine glycosylation is present at Asn-110. Xyloglucan contacts are provided by residues 119-121 and 129-131; these read HTN and DRE. Asn-146 is a glycosylation site (N-linked (GlcNAc...) asparagine). Residues 195–196 and Gly-200 each bind xyloglucan; that span reads DW. N-linked (GlcNAc...) asparagine glycans are attached at residues Asn-206 and Asn-231. Intrachain disulfides connect Cys-225–Cys-239 and Cys-282–Cys-296. The segment covering 236 to 253 has biased composition (low complexity); the sequence is TSPCSPGDSTSSSSSSTS. The segment at 236 to 258 is disordered; sequence TSPCSPGDSTSSSSSSTSEWFSQ. Arg-287 contributes to the xyloglucan binding site.

It belongs to the glycosyl hydrolase 16 family. XTH group 2 subfamily. Contains at least one intrachain disulfide bond essential for its enzymatic activity. Predominantly expressed in green siliques.

It localises to the secreted. It is found in the cell wall. The protein localises to the extracellular space. Its subcellular location is the apoplast. It catalyses the reaction breaks a beta-(1-&gt;4) bond in the backbone of a xyloglucan and transfers the xyloglucanyl segment on to O-4 of the non-reducing terminal glucose residue of an acceptor, which can be a xyloglucan or an oligosaccharide of xyloglucan.. Catalyzes xyloglucan endohydrolysis (XEH) and/or endotransglycosylation (XET). Cleaves and religates xyloglucan polymers, an essential constituent of the primary cell wall, and thereby participates in cell wall construction of growing tissues. In Arabidopsis thaliana (Mouse-ear cress), this protein is Probable xyloglucan endotransglucosylase/hydrolase protein 21 (XTH21).